The following is a 115-amino-acid chain: Large ribosomal subunit protein P2x (115 aa).

A disordered region spans residues 78–115; that stretch reads GGGGGAASAAEPVAESKKKVEEVKDESSDDAGMMGLFD. The segment covering 91–103 has biased composition (basic and acidic residues); it reads AESKKKVEEVKDE. 2 positions are modified to phosphoserine: Ser-104 and Ser-105.

This sequence belongs to the eukaryotic ribosomal protein P1/P2 family. In terms of assembly, P1 and P2 exist as dimers at the large ribosomal subunit.

Functionally, plays an important role in the elongation step of protein synthesis. The chain is Large ribosomal subunit protein P2x (RPP2C) from Arabidopsis thaliana (Mouse-ear cress).